We begin with the raw amino-acid sequence, 552 residues long: MASAASSKHLFVTGGVASSLGKGLTASSLGRLLKSRGLRVTMQKLDPYLNVDPGTMNPFQHGEVFVTDDGAETDLDIGHYERFLDTELSASANVTTGQIYSSVIAKERQGAYLGDTVQVIPHITNEIKARILAMDSEDVDVVITEIGGTVGDIESQPFLEAARQIRHEIGRDNCFFLHISLLPYLAPAGELKTKPTQHSVAALRSIGIQPDAIVCRADRPIPTSLKQKISLMCDVEEGGVVACPDAPSIYDIPKVLHREGLDAFVVRRLGLAFRDVDWTEWNDVLDRVHNPEHEVTIALVGKYVDLPDAYLSVTEALRAGGFAHRTRVNIRWVASDNCTTPEGAQRELDGVHGVLIPGGFGVRGIEGKVGAIRHARENGIPLLGICLGLQCMVIEYARDVAGLRGANSLEFDDKAEHPVVSTMADQTDVVAGERDMGGTMRLGLYPARLRENTLVRELYGGAEEVSERHRHRYEVSNAYRPVLEEAGLVISGVSPDGSLVEYVELPQDKHPFFLGTQAHPELRSRPTRPHPLFVGFIEAALKYSAGTGIADG.

The amidoligase domain stretch occupies residues 1-271 (MASAASSKHL…DAFVVRRLGL (271 aa)). Serine 18 provides a ligand contact to CTP. Serine 18 is a binding site for UTP. ATP contacts are provided by residues 19–24 (SLGKGL) and aspartate 76. Mg(2+) is bound by residues aspartate 76 and glutamate 145. CTP is bound by residues 152 to 154 (DIE), 192 to 197 (KTKPTQ), and lysine 228. UTP contacts are provided by residues 192-197 (KTKPTQ) and lysine 228. Residues 296–546 (TIALVGKYVD…IEAALKYSAG (251 aa)) form the Glutamine amidotransferase type-1 domain. Glycine 359 lines the L-glutamine pocket. Cysteine 386 functions as the Nucleophile; for glutamine hydrolysis in the catalytic mechanism. Residues 387-390 (LGLQ), glutamate 410, and arginine 472 contribute to the L-glutamine site. Residues histidine 519 and glutamate 521 contribute to the active site.

The protein belongs to the CTP synthase family. Homotetramer.

It catalyses the reaction UTP + L-glutamine + ATP + H2O = CTP + L-glutamate + ADP + phosphate + 2 H(+). The catalysed reaction is L-glutamine + H2O = L-glutamate + NH4(+). It carries out the reaction UTP + NH4(+) + ATP = CTP + ADP + phosphate + 2 H(+). The protein operates within pyrimidine metabolism; CTP biosynthesis via de novo pathway; CTP from UDP: step 2/2. Allosterically activated by GTP, when glutamine is the substrate; GTP has no effect on the reaction when ammonia is the substrate. The allosteric effector GTP functions by stabilizing the protein conformation that binds the tetrahedral intermediate(s) formed during glutamine hydrolysis. Inhibited by the product CTP, via allosteric rather than competitive inhibition. Catalyzes the ATP-dependent amination of UTP to CTP with either L-glutamine or ammonia as the source of nitrogen. Regulates intracellular CTP levels through interactions with the four ribonucleotide triphosphates. This Thermobifida fusca (strain YX) protein is CTP synthase.